The chain runs to 196 residues: Holliday junction branch migration complex subunit RuvA (196 aa).

The domain I stretch occupies residues 1–63 (MYEYFKGIIS…EDAELLYGFA (63 aa)). The segment at 64–142 (TEEEKQLFLS…AADGLAESKA (79 aa)) is domain II. Positions 143 to 146 (PVQT) are flexible linker. Residues 147–196 (VDNQELEEAMEAMLALGYKATELKKIKKFFEGTTDTAENYIKSALKMLVK) are domain III.

Belongs to the RuvA family. Homotetramer. Forms an RuvA(8)-RuvB(12)-Holliday junction (HJ) complex. HJ DNA is sandwiched between 2 RuvA tetramers; dsDNA enters through RuvA and exits via RuvB. An RuvB hexamer assembles on each DNA strand where it exits the tetramer. Each RuvB hexamer is contacted by two RuvA subunits (via domain III) on 2 adjacent RuvB subunits; this complex drives branch migration. In the full resolvosome a probable DNA-RuvA(4)-RuvB(12)-RuvC(2) complex forms which resolves the HJ.

It localises to the cytoplasm. The RuvA-RuvB-RuvC complex processes Holliday junction (HJ) DNA during genetic recombination and DNA repair, while the RuvA-RuvB complex plays an important role in the rescue of blocked DNA replication forks via replication fork reversal (RFR). RuvA specifically binds to HJ cruciform DNA, conferring on it an open structure. The RuvB hexamer acts as an ATP-dependent pump, pulling dsDNA into and through the RuvAB complex. HJ branch migration allows RuvC to scan DNA until it finds its consensus sequence, where it cleaves and resolves the cruciform DNA. This chain is Holliday junction branch migration complex subunit RuvA, found in Streptococcus gordonii (strain Challis / ATCC 35105 / BCRC 15272 / CH1 / DL1 / V288).